We begin with the raw amino-acid sequence, 321 residues long: Lipoyl synthase (321 aa).

[4Fe-4S] cluster-binding residues include Cys-68, Cys-73, Cys-79, Cys-94, Cys-98, Cys-101, and Ser-308. The Radical SAM core domain occupies 80–297; sequence FNHGTATFMI…REFAESIGFT (218 aa).

It belongs to the radical SAM superfamily. Lipoyl synthase family. It depends on [4Fe-4S] cluster as a cofactor.

It is found in the cytoplasm. The enzyme catalyses [[Fe-S] cluster scaffold protein carrying a second [4Fe-4S](2+) cluster] + N(6)-octanoyl-L-lysyl-[protein] + 2 oxidized [2Fe-2S]-[ferredoxin] + 2 S-adenosyl-L-methionine + 4 H(+) = [[Fe-S] cluster scaffold protein] + N(6)-[(R)-dihydrolipoyl]-L-lysyl-[protein] + 4 Fe(3+) + 2 hydrogen sulfide + 2 5'-deoxyadenosine + 2 L-methionine + 2 reduced [2Fe-2S]-[ferredoxin]. The protein operates within protein modification; protein lipoylation via endogenous pathway; protein N(6)-(lipoyl)lysine from octanoyl-[acyl-carrier-protein]: step 2/2. In terms of biological role, catalyzes the radical-mediated insertion of two sulfur atoms into the C-6 and C-8 positions of the octanoyl moiety bound to the lipoyl domains of lipoate-dependent enzymes, thereby converting the octanoylated domains into lipoylated derivatives. The protein is Lipoyl synthase of Shewanella sediminis (strain HAW-EB3).